A 513-amino-acid chain; its full sequence is 2,3-bisphosphoglycerate-independent phosphoglycerate mutase (513 aa).

2 residues coordinate Mn(2+): Asp13 and Ser63. The active-site Phosphoserine intermediate is the Ser63. Residues His124, 154 to 155, Arg186, Arg192, 262 to 265, and Lys335 each bind substrate; these read RD and RADR. The Mn(2+) site is built by Asp402, His406, Asp443, His444, and His462.

Belongs to the BPG-independent phosphoglycerate mutase family. In terms of assembly, monomer. Mn(2+) serves as cofactor.

The catalysed reaction is (2R)-2-phosphoglycerate = (2R)-3-phosphoglycerate. It functions in the pathway carbohydrate degradation; glycolysis; pyruvate from D-glyceraldehyde 3-phosphate: step 3/5. Functionally, catalyzes the interconversion of 2-phosphoglycerate and 3-phosphoglycerate. The protein is 2,3-bisphosphoglycerate-independent phosphoglycerate mutase of Shewanella frigidimarina (strain NCIMB 400).